We begin with the raw amino-acid sequence, 500 residues long: Aspartyl/glutamyl-tRNA(Asn/Gln) amidotransferase subunit B (500 aa).

The protein belongs to the GatB/GatE family. GatB subfamily. As to quaternary structure, heterotrimer of A, B and C subunits.

It carries out the reaction L-glutamyl-tRNA(Gln) + L-glutamine + ATP + H2O = L-glutaminyl-tRNA(Gln) + L-glutamate + ADP + phosphate + H(+). The enzyme catalyses L-aspartyl-tRNA(Asn) + L-glutamine + ATP + H2O = L-asparaginyl-tRNA(Asn) + L-glutamate + ADP + phosphate + 2 H(+). In terms of biological role, allows the formation of correctly charged Asn-tRNA(Asn) or Gln-tRNA(Gln) through the transamidation of misacylated Asp-tRNA(Asn) or Glu-tRNA(Gln) in organisms which lack either or both of asparaginyl-tRNA or glutaminyl-tRNA synthetases. The reaction takes place in the presence of glutamine and ATP through an activated phospho-Asp-tRNA(Asn) or phospho-Glu-tRNA(Gln). The chain is Aspartyl/glutamyl-tRNA(Asn/Gln) amidotransferase subunit B from Rhizobium etli (strain CIAT 652).